Consider the following 130-residue polypeptide: Ion transport peptide (130 aa).

Disulfide bonds link Cys62/Cys98, Cys78/Cys94, and Cys81/Cys107. Residue Leu127 is modified to Leucine amide.

This sequence belongs to the arthropod CHH/MIH/GIH/VIH hormone family. In terms of tissue distribution, brain and corpus cardiacum.

It localises to the secreted. Its function is as follows. Stimulates salt and water reabsorption and inhibits acid secretion in the ileum of S.gregaria. This chain is Ion transport peptide, found in Schistocerca gregaria (Desert locust).